A 244-amino-acid chain; its full sequence is 5-oxoprolinase subunit A (244 aa).

It belongs to the LamB/PxpA family. In terms of assembly, forms a complex composed of PxpA, PxpB and PxpC.

The enzyme catalyses 5-oxo-L-proline + ATP + 2 H2O = L-glutamate + ADP + phosphate + H(+). Its function is as follows. Catalyzes the cleavage of 5-oxoproline to form L-glutamate coupled to the hydrolysis of ATP to ADP and inorganic phosphate. The sequence is that of 5-oxoprolinase subunit A from Salmonella newport (strain SL254).